A 101-amino-acid chain; its full sequence is MAKTSAVEKNKRRRTTVANQAAKRAALKAIIMNQALPIEERFKASIKLASLPRDGSKTRIRNRCEVSGRPRAYYRKLRMSRIALRELGNLGKVPGIVKSSW.

It belongs to the universal ribosomal protein uS14 family. As to quaternary structure, part of the 30S ribosomal subunit. Contacts proteins S3 and S10.

In terms of biological role, binds 16S rRNA, required for the assembly of 30S particles and may also be responsible for determining the conformation of the 16S rRNA at the A site. This is Small ribosomal subunit protein uS14 from Rhizobium etli (strain CIAT 652).